Here is a 134-residue protein sequence, read N- to C-terminus: Methylglyoxal synthase (134 aa).

Residues 1–134 (MHIALIAHDE…DWRDLRRNDE (134 aa)) enclose the MGS-like domain. Substrate is bound by residues histidine 8, lysine 12, 34–37 (TGTT), and 54–55 (SG). Aspartate 60 acts as the Proton donor/acceptor in catalysis. A substrate-binding site is contributed by histidine 87.

Belongs to the methylglyoxal synthase family.

The enzyme catalyses dihydroxyacetone phosphate = methylglyoxal + phosphate. Functionally, catalyzes the formation of methylglyoxal from dihydroxyacetone phosphate. This Listeria monocytogenes serotype 4b (strain CLIP80459) protein is Methylglyoxal synthase.